Here is a 330-residue protein sequence, read N- to C-terminus: B3 domain-containing protein REM21 (330 aa).

Positions 23–116 form a DNA-binding region, TF-B3; the sequence is PRFFTVFLSH…SYEVSIYGRG (94 aa). Residues 129-138 show a composition bias toward acidic residues; it reads EISDDTEDDN. Residues 129–169 are disordered; the sequence is EISDDTEDDNVSLHSPSNVSLDSLSNDSHHSTSNVSLRSLS. Residues 142 to 162 show a composition bias toward low complexity; that stretch reads HSPSNVSLDSLSNDSHHSTSN.

The protein resides in the nucleus. In Arabidopsis thaliana (Mouse-ear cress), this protein is B3 domain-containing protein REM21 (REM21).